The primary structure comprises 413 residues: Glucose-1-phosphate adenylyltransferase (413 aa).

Residues G169, 184-185 (EK), and S201 each bind alpha-D-glucose 1-phosphate.

The protein belongs to the bacterial/plant glucose-1-phosphate adenylyltransferase family. As to quaternary structure, homotetramer.

The catalysed reaction is alpha-D-glucose 1-phosphate + ATP + H(+) = ADP-alpha-D-glucose + diphosphate. It participates in glycan biosynthesis; glycogen biosynthesis. Functionally, involved in the biosynthesis of ADP-glucose, a building block required for the elongation reactions to produce glycogen. Catalyzes the reaction between ATP and alpha-D-glucose 1-phosphate (G1P) to produce pyrophosphate and ADP-Glc. This chain is Glucose-1-phosphate adenylyltransferase, found in Trichlorobacter lovleyi (strain ATCC BAA-1151 / DSM 17278 / SZ) (Geobacter lovleyi).